The primary structure comprises 249 residues: Small ribosomal subunit protein uS3 (249 aa).

The KH type-2 domain occupies valine 39 to arginine 107. A disordered region spans residues leucine 215–glycine 249. Residues glycine 230 to glycine 249 show a composition bias toward basic and acidic residues.

Belongs to the universal ribosomal protein uS3 family. In terms of assembly, part of the 30S ribosomal subunit. Forms a tight complex with proteins S10 and S14.

In terms of biological role, binds the lower part of the 30S subunit head. Binds mRNA in the 70S ribosome, positioning it for translation. The polypeptide is Small ribosomal subunit protein uS3 (Caulobacter sp. (strain K31)).